A 369-amino-acid chain; its full sequence is O-methyltransferase 12 (369 aa).

S-adenosyl-L-methionine contacts are provided by residues G181, D204, 229–231 (GDF), D230, F231, and K244. Catalysis depends on H248, which acts as the Proton acceptor.

It belongs to the class I-like SAM-binding methyltransferase superfamily. Cation-independent O-methyltransferase family. COMT subfamily.

The catalysed reaction is resorcinol + S-adenosyl-L-methionine = 3-methoxyphenol + S-adenosyl-L-homocysteine + H(+). Its function is as follows. S-adenosyl-L-methionine dependent O-methyltransferase that may be involved in modifying resorcinol ring to synthesize a variant of 4-methyl-5-pentylbenzene-1,3-diol. The protein is O-methyltransferase 12 (omt12) of Dictyostelium discoideum (Social amoeba).